A 267-amino-acid chain; its full sequence is Zinc finger protein ZAT1 (267 aa).

The segment at 5-27 (HKCKLCWKSFANGRALGGHMRSH) adopts a C2H2-type 1 zinc-finger fold. Disordered regions lie at residues 34–99 (PSQP…ADIK) and 181–204 (SHKK…KKKS). Residues 52–62 (QDRESETESSK) are compositionally biased toward basic and acidic residues. Over residues 63–73 (KPSRKRSRLNR) the composition is skewed to basic residues. Residues 83-97 (QSNEEGKSETARAAD) show a composition bias toward basic and acidic residues. 2 C2H2-type zinc fingers span residues 160–182 (FECE…RASH) and 209–231 (HECP…KRSH).

It is found in the nucleus. In terms of biological role, probable transcription factor that may be involved in stress responses. This is Zinc finger protein ZAT1 (ZAT1) from Arabidopsis thaliana (Mouse-ear cress).